The sequence spans 377 residues: Cell division protein FtsZ (377 aa).

Residues 1 to 16 (MDSIVDDAIDEAEDMG) show a composition bias toward acidic residues. The segment at 1–33 (MDSIVDDAIDEAEDMGDGSAEVGGPTDINRSGT) is disordered. GTP-binding positions include 57–61 (GAGGN), 144–146 (GTG), glutamate 175, arginine 179, and aspartate 222.

Belongs to the FtsZ family. Homodimer. Polymerizes to form a dynamic ring structure in a strictly GTP-dependent manner. Interacts directly with several other division proteins.

The protein localises to the cytoplasm. Functionally, essential cell division protein that forms a contractile ring structure (Z ring) at the future cell division site. The regulation of the ring assembly controls the timing and the location of cell division. One of the functions of the FtsZ ring is to recruit other cell division proteins to the septum to produce a new cell wall between the dividing cells. Binds GTP and shows GTPase activity. The sequence is that of Cell division protein FtsZ from Haloferax mediterranei (strain ATCC 33500 / DSM 1411 / JCM 8866 / NBRC 14739 / NCIMB 2177 / R-4) (Halobacterium mediterranei).